The sequence spans 271 residues: Oxamate carbamoyltransferase subunit AllH (271 aa).

The protein belongs to the AllH family. The OXTCase is composed of 3 subunits, AllF, AllG and AllH. Mg(2+) serves as cofactor.

The enzyme catalyses oxamate + carbamoyl phosphate = N-carbamoyl-2-oxoglycine + phosphate. It participates in nitrogen metabolism; (S)-allantoin degradation. In terms of biological role, component of a carbamoyltransferase involved in the anaerobic nitrogen utilization via the assimilation of allantoin. Catalyzes the conversion of oxalurate (N-carbamoyl-2-oxoglycine) to oxamate and carbamoyl phosphate. This Escherichia coli O157:H7 protein is Oxamate carbamoyltransferase subunit AllH.